The following is a 218-amino-acid chain: ETS domain-containing protein ets-7 (218 aa).

Residues 12 to 93 (QRLLNFLRGL…KGKDSRYCFL (82 aa)) constitute a DNA-binding region (ETS). A compositionally biased stretch (low complexity) spans 131–161 (TSNFSLQSSPSSSSNSSSARTMSATSSPTSS). A disordered region spans residues 131-162 (TSNFSLQSSPSSSSNSSSARTMSATSSPTSSL).

It belongs to the ETS family.

Its subcellular location is the nucleus. In terms of biological role, probable transcription factor. Involved in responses to oxidative stress. This is ETS domain-containing protein ets-7 from Caenorhabditis elegans.